A 377-amino-acid polypeptide reads, in one-letter code: Trans-enoyl reductase FMN2 (377 aa).

The Enoyl reductase (ER) domain maps to 7 to 370 (NASGGYCLNS…DGVIRGKKLV (364 aa)). The tract at residues 143 to 173 (LSDMTGNGRSNGYTNGHTNGHTNGHSKGEEE) is disordered. Over residues 144 to 155 (SDMTGNGRSNGY) the composition is skewed to polar residues. The span at 156-167 (TNGHTNGHTNGH) shows a compositional bias: low complexity. Residues 186–189 (ASAS), 209–212 (SPAN), Tyr227, and 274–275 (LD) contribute to the NADP(+) site.

It belongs to the zinc-containing alcohol dehydrogenase family.

The protein operates within secondary metabolite biosynthesis. Its function is as follows. Trans-enoyl reductase; part of the gene cluster that mediates the biosynthesis of fusamarins, isocoumarin derivatives that show moderate cytotoxicity with IC(50) values between 1 and 50 uM. The polyketide synthase FMN1 probably synthesizes two different polyketides, a tetra- and a pentaketide, containinga varying number of double bonds depending on the selective actions of the trans-enoyl reductase FMN2. Chain fusion will presumably be mediated by the KS domain before finally offloading is catalyzed by the alpha/beta hydrolase fold enzyme FMN3. The protein is Trans-enoyl reductase FMN2 of Fusarium mangiferae (Mango malformation disease fungus).